A 433-amino-acid polypeptide reads, in one-letter code: Trigger factor (433 aa).

One can recognise a PPIase FKBP-type domain in the interval 163-248 (GDVVVLDFAA…VHAVKERRLP (86 aa)).

This sequence belongs to the FKBP-type PPIase family. Tig subfamily.

The protein resides in the cytoplasm. It carries out the reaction [protein]-peptidylproline (omega=180) = [protein]-peptidylproline (omega=0). Functionally, involved in protein export. Acts as a chaperone by maintaining the newly synthesized protein in an open conformation. Functions as a peptidyl-prolyl cis-trans isomerase. The chain is Trigger factor from Nitratidesulfovibrio vulgaris (strain ATCC 29579 / DSM 644 / CCUG 34227 / NCIMB 8303 / VKM B-1760 / Hildenborough) (Desulfovibrio vulgaris).